A 249-amino-acid chain; its full sequence is Proteasome subunit alpha type-4 (249 aa).

The protein belongs to the peptidase T1A family. As to quaternary structure, the 26S proteasome consists of a 20S proteasome core and two 19S regulatory subunits. The 20S proteasome core is composed of 28 subunits that are arranged in four stacked rings, resulting in a barrel-shaped structure. The two end rings are each formed by seven alpha subunits, and the two central rings are each formed by seven beta subunits. The catalytic chamber with the active sites is on the inside of the barrel.

It localises to the cytoplasm. The protein localises to the nucleus. In terms of biological role, the proteasome is a multicatalytic proteinase complex which is characterized by its ability to cleave peptides with Arg, Phe, Tyr, Leu, and Glu adjacent to the leaving group at neutral or slightly basic pH. The proteasome has an ATP-dependent proteolytic activity. In Petunia hybrida (Petunia), this protein is Proteasome subunit alpha type-4 (PAC1).